The chain runs to 392 residues: Phospho-N-acetylmuramoyl-pentapeptide-transferase (392 aa).

A run of 10 helical transmembrane segments spans residues 28–48, 76–96, 100–120, 137–157, 193–213, 225–245, 262–282, 289–309, 314–334, and 369–389; these read RALM…PFVI, TMGG…WFDL, FVWI…VDDW, YLWQ…SISE, ISYP…IVGS, GLAI…AYVT, SGEL…FLWF, VFMG…IAVI, IVLA…MLQV, and QVVV…LSTL.

Belongs to the glycosyltransferase 4 family. MraY subfamily. Mg(2+) is required as a cofactor.

It localises to the cell inner membrane. It carries out the reaction UDP-N-acetyl-alpha-D-muramoyl-L-alanyl-gamma-D-glutamyl-meso-2,6-diaminopimeloyl-D-alanyl-D-alanine + di-trans,octa-cis-undecaprenyl phosphate = di-trans,octa-cis-undecaprenyl diphospho-N-acetyl-alpha-D-muramoyl-L-alanyl-D-glutamyl-meso-2,6-diaminopimeloyl-D-alanyl-D-alanine + UMP. The protein operates within cell wall biogenesis; peptidoglycan biosynthesis. Its function is as follows. Catalyzes the initial step of the lipid cycle reactions in the biosynthesis of the cell wall peptidoglycan: transfers peptidoglycan precursor phospho-MurNAc-pentapeptide from UDP-MurNAc-pentapeptide onto the lipid carrier undecaprenyl phosphate, yielding undecaprenyl-pyrophosphoryl-MurNAc-pentapeptide, known as lipid I. The chain is Phospho-N-acetylmuramoyl-pentapeptide-transferase from Polaromonas naphthalenivorans (strain CJ2).